The primary structure comprises 367 residues: Homeobox protein Nkx-6.1 (367 aa).

A disordered region spans residues 36–133 (YPAAYPPLPA…SSSSSSSASA (98 aa)). Low complexity-rich tracts occupy residues 48 to 59 (PSSSSSSSSSSS), 78 to 91 (GGLS…QQLS), and 110 to 133 (ASGA…SASA). A repressor domain region spans residues 102-268 (LSRPSMPVAS…KYLAGPERAR (167 aa)). Arg-189 carries the asymmetric dimethylarginine modification. A DNA-binding region (homeobox) is located at residues 236–295 (RKHTRPTFSGQQIFALEKTFEQTKYLAGPERARLAYSLGMTESQVKVWFQNRRTKWRKKH). Residues 294 to 367 (KHAAEMATAK…LHASEPESSS (74 aa)) form a disordered region. The span at 304-317 (KKQDSETERLKGAS) shows a compositional bias: basic and acidic residues. Positions 306–367 (QDSETERLKG…LHASEPESSS (62 aa)) are involved in DNA-binding.

In terms of tissue distribution, pancreatic beta cells.

The protein resides in the nucleus. Functionally, transcription factor which binds to specific A/T-rich DNA sequences in the promoter regions of a number of genes. Involved in the development of insulin-producing beta cells in the islets of Langerhans at the secondary transition. Together with NKX2-2 and IRX3 acts to restrict the generation of motor neurons to the appropriate region of the neural tube. Belongs to the class II proteins of neuronal progenitor factors, which are induced by SHH signals. This chain is Homeobox protein Nkx-6.1 (NKX6-1), found in Homo sapiens (Human).